The primary structure comprises 596 residues: Beta-fructofuranosidase, insoluble isoenzyme 7 (596 aa).

The first 24 residues, Met1–Ser24, serve as a signal peptide directing secretion. Substrate-binding positions include Trp51–Asp54, Gln70, and Trp78. Asp54 is a catalytic residue. The N-linked (GlcNAc...) asparagine glycan is linked to Asn82. Residues Trp115–Ser116, Arg179–Asp180, and Glu234 contribute to the substrate site. Asn330 is a glycosylation site (N-linked (GlcNAc...) asparagine). Residues Cys432 and Cys478 are joined by a disulfide bond. An N-linked (GlcNAc...) asparagine glycan is attached at Asn552.

It belongs to the glycosyl hydrolase 32 family.

Its subcellular location is the secreted. The protein resides in the extracellular space. It localises to the apoplast. It is found in the cell wall. The catalysed reaction is Hydrolysis of terminal non-reducing beta-D-fructofuranoside residues in beta-D-fructofuranosides.. May play a role in sucrose partitioning during seed development. This is Beta-fructofuranosidase, insoluble isoenzyme 7 (CIN7) from Oryza sativa subsp. indica (Rice).